The sequence spans 672 residues: Probable urocanate hydratase (672 aa).

Residues 128–129, glutamine 206, 253–255, glutamate 273, 318–319, 340–344, 351–352, tyrosine 400, and glycine 592 contribute to the NAD(+) site; these read GG, GMS, NV, QTSLH, and YY.

This sequence belongs to the urocanase family. The cofactor is NAD(+).

The enzyme catalyses 4-imidazolone-5-propanoate = trans-urocanate + H2O. It participates in amino-acid degradation; L-histidine degradation into L-glutamate; N-formimidoyl-L-glutamate from L-histidine: step 2/3. This Dictyostelium discoideum (Social amoeba) protein is Probable urocanate hydratase (uroc1).